The chain runs to 472 residues: Sulfate adenylyltransferase subunit 1 (472 aa).

The tr-type G domain maps to 24 to 240 (KSLLRFLTCG…ENAEVGTRDL (217 aa)). Positions 33 to 40 (GSVDDGKS) are G1. Position 33–40 (33–40 (GSVDDGKS)) interacts with GTP. The G2 stretch occupies residues 91 to 95 (GITID). Positions 112-115 (DTPG) are G3. Residues 112-116 (DTPGH) and 167-170 (NKMD) each bind GTP. The interval 167–170 (NKMD) is G4. The tract at residues 204-206 (SAL) is G5.

Belongs to the TRAFAC class translation factor GTPase superfamily. Classic translation factor GTPase family. CysN/NodQ subfamily. As to quaternary structure, heterodimer composed of CysD, the smaller subunit, and CysN.

The enzyme catalyses sulfate + ATP + H(+) = adenosine 5'-phosphosulfate + diphosphate. It functions in the pathway sulfur metabolism; hydrogen sulfide biosynthesis; sulfite from sulfate: step 1/3. Functionally, with CysD forms the ATP sulfurylase (ATPS) that catalyzes the adenylation of sulfate producing adenosine 5'-phosphosulfate (APS) and diphosphate, the first enzymatic step in sulfur assimilation pathway. APS synthesis involves the formation of a high-energy phosphoric-sulfuric acid anhydride bond driven by GTP hydrolysis by CysN coupled to ATP hydrolysis by CysD. The protein is Sulfate adenylyltransferase subunit 1 of Tolumonas auensis (strain DSM 9187 / NBRC 110442 / TA 4).